Here is a 252-residue protein sequence, read N- to C-terminus: 2-succinyl-6-hydroxy-2,4-cyclohexadiene-1-carboxylate synthase (252 aa).

Belongs to the AB hydrolase superfamily. MenH family. Monomer.

The catalysed reaction is 5-enolpyruvoyl-6-hydroxy-2-succinyl-cyclohex-3-ene-1-carboxylate = (1R,6R)-6-hydroxy-2-succinyl-cyclohexa-2,4-diene-1-carboxylate + pyruvate. Its pathway is quinol/quinone metabolism; 1,4-dihydroxy-2-naphthoate biosynthesis; 1,4-dihydroxy-2-naphthoate from chorismate: step 3/7. It functions in the pathway quinol/quinone metabolism; menaquinone biosynthesis. Functionally, catalyzes a proton abstraction reaction that results in 2,5-elimination of pyruvate from 2-succinyl-5-enolpyruvyl-6-hydroxy-3-cyclohexene-1-carboxylate (SEPHCHC) and the formation of 2-succinyl-6-hydroxy-2,4-cyclohexadiene-1-carboxylate (SHCHC). The protein is 2-succinyl-6-hydroxy-2,4-cyclohexadiene-1-carboxylate synthase of Escherichia coli O81 (strain ED1a).